Consider the following 156-residue polypeptide: Transcription elongation factor GreA (156 aa).

The stretch at 44-67 forms a coiled coil; that stretch reads ENAEYEAAKEKQAMIEGRIQDLCQ.

This sequence belongs to the GreA/GreB family.

Its function is as follows. Necessary for efficient RNA polymerase transcription elongation past template-encoded arresting sites. The arresting sites in DNA have the property of trapping a certain fraction of elongating RNA polymerases that pass through, resulting in locked ternary complexes. Cleavage of the nascent transcript by cleavage factors such as GreA or GreB allows the resumption of elongation from the new 3'terminus. GreA releases sequences of 2 to 3 nucleotides. The chain is Transcription elongation factor GreA from Syntrophobacter fumaroxidans (strain DSM 10017 / MPOB).